The following is a 311-amino-acid chain: GTP cyclohydrolase FolE2 (311 aa).

Belongs to the GTP cyclohydrolase IV family.

It catalyses the reaction GTP + H2O = 7,8-dihydroneopterin 3'-triphosphate + formate + H(+). Its pathway is cofactor biosynthesis; 7,8-dihydroneopterin triphosphate biosynthesis; 7,8-dihydroneopterin triphosphate from GTP: step 1/1. Functionally, converts GTP to 7,8-dihydroneopterin triphosphate. The sequence is that of GTP cyclohydrolase FolE2 from Hydrogenovibrio crunogenus (strain DSM 25203 / XCL-2) (Thiomicrospira crunogena).